The sequence spans 523 residues: GMP synthase [glutamine-hydrolyzing] (523 aa).

Residues 8-205 (KILILDFGSQ…VVNICGCETK (198 aa)) enclose the Glutamine amidotransferase type-1 domain. The active-site Nucleophile is the cysteine 85. Catalysis depends on residues histidine 179 and glutamate 181. Residues 206 to 398 (WTAENIIEDA…LGLPAEMLNR (193 aa)) form the GMPS ATP-PPase domain. Residue 233-239 (SGGVDSS) participates in ATP binding.

Homodimer.

It catalyses the reaction XMP + L-glutamine + ATP + H2O = GMP + L-glutamate + AMP + diphosphate + 2 H(+). Its pathway is purine metabolism; GMP biosynthesis; GMP from XMP (L-Gln route): step 1/1. Catalyzes the synthesis of GMP from XMP. This chain is GMP synthase [glutamine-hydrolyzing], found in Glaesserella parasuis serovar 5 (strain SH0165) (Haemophilus parasuis).